The following is a 617-amino-acid chain: MGKIIGIDLGTTNSCVAVLEGGEPTVIPNAEGNRTTPSVVAYTKKGERIVGEPAKRQAITNPDQTIRSIKRHMGTDHKVTLNDKEYTPQEISAMILQKLKRDAEEYLGEEVNEAVITVPAYFTDSQRQATKDAGRIAGLEVKRIINEPTAAALAYGLDKEGDKTILVFDLGGGTFDVSLLEIGDGVFEVVATSGNNHLGGDDFDKRIIDYLAENFKKEYGVDLRDDRMALQRLKDAAEKAKKELSSVKTTNINLPFITQTEDGPKHLDIDLTRAKFNELTEDLVEKTMGPTRQALKDAGLEPGDIDEVILVGGSTRIPAVQEAVKDFIGKAPHKGINPDEVVAMGAAIQAGVLAGDVDDIVLLDVTPLSLGIETLGGVFTKLIERNTTIPTSKKKVFTTAADNQTSVDIHVLQGERKLAKDNVTLGRFQLTGIPPAPRGVPQIEVKFDIDANGIVHVSAKDLGTGKKQQITIKSSSGLSEDEIEKMVNDARKHEEEDKKRLEEIEARNEADSLVYQTEKTLKESGDKVSKDVKDKVEKAKDELKKALEGDDVDQIKEKTEALKNELTELSSQLYAQAQQQAQQQAQGQQGAQTDNQTGQNDGKTIDVDYEEVDDDDK.

T174 carries the phosphothreonine; by autocatalysis modification. Residues 575-592 (AQAQQQAQQQAQGQQGAQ) show a composition bias toward low complexity. The disordered stretch occupies residues 575 to 617 (AQAQQQAQQQAQGQQGAQTDNQTGQNDGKTIDVDYEEVDDDDK). Polar residues predominate over residues 593-602 (TDNQTGQNDG). Residues 607–617 (VDYEEVDDDDK) show a composition bias toward acidic residues.

Belongs to the heat shock protein 70 family.

Its function is as follows. Acts as a chaperone. This chain is Chaperone protein DnaK, found in Halothermothrix orenii (strain H 168 / OCM 544 / DSM 9562).